Here is a 77-residue protein sequence, read N- to C-terminus: Oxyopinin-4a (77 aa).

The N-terminal stretch at 1 to 20 (MKISQVFIFVFLLMISVAWA) is a signal peptide. A propeptide spanning residues 21-47 (NEAYEEESNYLSERFDADVEEITPEFR) is cleaved from the precursor. A disulfide bond links Cys51 and Cys57.

As to expression, expressed by the venom gland.

It is found in the secreted. The protein localises to the target cell membrane. Disrupts cell membranes through the formation of pores. Has antibacterial activity against Gram-positive bacteria S.aureus (MIC=10 uM) and B.subtilis (MIC=0.5 uM) as well as Gram-negative bacteria P.fluorescens (MIC=1 uM) and E.coli (MIC=0.5 uM). Has hemolytic activity against human erythrocytes (EC(50)=7 uM). The polypeptide is Oxyopinin-4a (Oxyopes takobius (Lynx spider)).